The following is a 366-amino-acid chain: Zinc finger protein ubi-d4 B (366 aa).

Disordered stretches follow at residues 41-94 and 140-167; these read ASAP…DGSS and DDLDDEDYEEDTPKRRKGKSKGKGIGGA. Residues 76 to 86 are compositionally biased toward basic and acidic residues; the sequence is PDPEQMLKKEG. Over residues 140–149 the composition is skewed to acidic residues; that stretch reads DDLDDEDYEE. The segment at 183-206 adopts a C2H2-type zinc-finger fold; that stretch reads YACDICGKRYKNRPGLSYHYAHSH. Residues 211–243 are disordered; that stretch reads EGAGAEDKEDSQPPTPIMHRSEEQKSKKGPDGL. Residues 229–240 show a composition bias toward basic and acidic residues; it reads HRSEEQKSKKGP. 2 consecutive PHD-type zinc fingers follow at residues 247-307 and 304-354; these read NNYC…CKCC and CKCC…CLDL.

The protein belongs to the requiem/DPF family.

It is found in the cytoplasm. The protein resides in the nucleus. Its function is as follows. May be a transcription factor required for the apoptosis response following survival factor withdrawal from myeloid cells. Might also have a role in the development and maturation of lymphoid cells. This chain is Zinc finger protein ubi-d4 B (req-b), found in Xenopus laevis (African clawed frog).